Consider the following 139-residue polypeptide: Acyl carrier protein 4, chloroplastic (139 aa).

The N-terminal 55 residues, 1–55 (MASAAAGASICIKSASCSPLAPGRISSLRSVSLPVSRKSFPSLRSSKGSFARVSC), are a transit peptide targeting the chloroplast. The region spanning 59–134 (PETVAKVCRI…DAADLIEKLM (76 aa)) is the Carrier domain. The residue at position 94 (S94) is an O-(pantetheine 4'-phosphoryl)serine.

It belongs to the acyl carrier protein (ACP) family. Post-translationally, 4'-phosphopantetheine is transferred from CoA to a specific serine of apo-ACP by acpS. This modification is essential for activity because fatty acids are bound in thioester linkage to the sulfhydryl of the prosthetic group.

The protein localises to the plastid. The protein resides in the chloroplast. It participates in lipid metabolism; fatty acid biosynthesis. Its function is as follows. Carrier of the growing fatty acid chain in fatty acid biosynthesis. This is Acyl carrier protein 4, chloroplastic (ACL1) from Cuphea lanceolata (Cigar flower).